The chain runs to 526 residues: Bifunctional purine biosynthesis protein PurH (526 aa).

The 147-residue stretch at 1-147 folds into the MGS-like domain; that stretch reads MSVIKRALIS…KNWKHVAIVT (147 aa).

It belongs to the PurH family.

The catalysed reaction is (6R)-10-formyltetrahydrofolate + 5-amino-1-(5-phospho-beta-D-ribosyl)imidazole-4-carboxamide = 5-formamido-1-(5-phospho-D-ribosyl)imidazole-4-carboxamide + (6S)-5,6,7,8-tetrahydrofolate. It carries out the reaction IMP + H2O = 5-formamido-1-(5-phospho-D-ribosyl)imidazole-4-carboxamide. It participates in purine metabolism; IMP biosynthesis via de novo pathway; 5-formamido-1-(5-phospho-D-ribosyl)imidazole-4-carboxamide from 5-amino-1-(5-phospho-D-ribosyl)imidazole-4-carboxamide (10-formyl THF route): step 1/1. Its pathway is purine metabolism; IMP biosynthesis via de novo pathway; IMP from 5-formamido-1-(5-phospho-D-ribosyl)imidazole-4-carboxamide: step 1/1. The sequence is that of Bifunctional purine biosynthesis protein PurH from Neisseria gonorrhoeae (strain ATCC 700825 / FA 1090).